Reading from the N-terminus, the 46-residue chain is Esculentin-1HSa (46 aa).

Cysteines 40 and 46 form a disulfide.

In terms of tissue distribution, expressed by the skin glands.

Its subcellular location is the secreted. Functionally, has antibacterial activity against the Gram-positive bacterium S.aureus ATCC 25923 (MIC=12 uM) and the Gram-negative bacterium E.coli ATCC 25726 (MIC=12 uM). In Odorrana hosii (Hose's rock frog), this protein is Esculentin-1HSa.